A 238-amino-acid polypeptide reads, in one-letter code: DNA repair protein RecO (238 aa).

This sequence belongs to the RecO family.

Its function is as follows. Involved in DNA repair and RecF pathway recombination. This is DNA repair protein RecO from Aliivibrio fischeri (strain ATCC 700601 / ES114) (Vibrio fischeri).